A 321-amino-acid polypeptide reads, in one-letter code: Thioredoxin reductase (321 aa).

FAD is bound at residue 36–43; that stretch reads TGMEKGGQ. A disulfide bridge links Cys136 with Cys139. 287–296 is an FAD binding site; that stretch reads DVMDHIYRQA.

This sequence belongs to the class-II pyridine nucleotide-disulfide oxidoreductase family. In terms of assembly, homodimer. FAD is required as a cofactor.

It is found in the cytoplasm. The enzyme catalyses [thioredoxin]-dithiol + NADP(+) = [thioredoxin]-disulfide + NADPH + H(+). In Escherichia coli O157:H7, this protein is Thioredoxin reductase (trxB).